The following is an 861-amino-acid chain: E3 ubiquitin-protein ligase HECTD3 (861 aa).

A2 bears the N-acetylalanine mark. Residue S12 is modified to Phosphoserine. Positions 219–397 (DEDLIHFLYD…TSLVRYPRLE (179 aa)) constitute a DOC domain. Residues 512–857 (YEKPLDYRWP…NCVAIDTDMS (346 aa)) form the HECT domain. C823 functions as the Glycyl thioester intermediate in the catalytic mechanism.

Interacts with TRIOBP. Interacts with STX8.

The protein resides in the cytoplasm. Its subcellular location is the perinuclear region. It catalyses the reaction S-ubiquitinyl-[E2 ubiquitin-conjugating enzyme]-L-cysteine + [acceptor protein]-L-lysine = [E2 ubiquitin-conjugating enzyme]-L-cysteine + N(6)-ubiquitinyl-[acceptor protein]-L-lysine.. It participates in protein modification; protein ubiquitination. In terms of biological role, E3 ubiquitin ligases accepts ubiquitin from an E2 ubiquitin-conjugating enzyme in the form of a thioester and then directly transfers the ubiquitin to targeted substrates. Mediates ubiquitination of TRIOBP and its subsequent proteasomal degradation, thus facilitating cell cycle progression by regulating the turn-over of TRIOBP. Mediates also ubiquitination of STX8. This Homo sapiens (Human) protein is E3 ubiquitin-protein ligase HECTD3 (HECTD3).